A 538-amino-acid polypeptide reads, in one-letter code: Putative cysteine ligase BshC (538 aa).

A coiled-coil region spans residues 248–268 (ISKYKEVQEGLRNQQEVIKEL).

This sequence belongs to the BshC family.

Involved in bacillithiol (BSH) biosynthesis. May catalyze the last step of the pathway, the addition of cysteine to glucosamine malate (GlcN-Mal) to generate BSH. The chain is Putative cysteine ligase BshC from Bacillus cereus (strain G9842).